The sequence spans 547 residues: Leiomodin-2 (547 aa).

The interaction with tropomyosin alpha stretch occupies residues 1–47; it reads MSTFGYRRGLSKYESIDEDELLASLSAEELKELERELEDIEPDRNLP. Interaction with actin stretches follow at residues 1–161, 162–497, and 521–540; these read MSTF…SDNS, KPKI…KEIK, and AHEN…LKRV. S11, S15, and S24 each carry phosphoserine. Residues 16–41 adopt a coiled-coil conformation; it reads IDEDELLASLSAEELKELERELEDIE. 2 disordered regions span residues 91 to 162 and 352 to 533; these read KVAE…DNSK and MDKQ…RGSS. Composition is skewed to acidic residues over residues 95–104 and 112–139; these read DKEESEEELI and VSEE…EEER. The stretch at 113 to 148 forms a coiled coil; the sequence is SEEVYTEEEEEESQEEEEEEDSDEEERTIETAKGIN. Residues 149–160 are compositionally biased toward polar residues; the sequence is GTVNYDSVNSDN. The segment covering 352 to 367 has biased composition (basic and acidic residues); it reads MDKQRQKRLQEQKQQE. Position 400 is a phosphoserine (S400). Over residues 419 to 449 the composition is skewed to pro residues; that stretch reads ATPPPPPPPPPPPPPSSQRLPPPPPPPPPPL. Over residues 465 to 475 the composition is skewed to polar residues; the sequence is QQESAQRALQN. Residues 477–487 show a composition bias toward basic residues; that stretch reads QKKKKGKKVKK. Residues 494-512 are compositionally biased toward basic and acidic residues; it reads KEIKNSLRSVQEKKMEDSS. Residues 521–540 form the WH2 domain; that stretch reads AHENLMEAIRGSSIKQLKRV.

Belongs to the tropomodulin family. As to quaternary structure, can bind at least three actin monomers and thereby provides a nucleus for actin filament formation. Interacts (via N-terminus) with tropomyosin alpha (TPM1) (via N-terminus). May also interact with TPM2 (via N-terminus). Interacts with FLII. As to expression, specifically expressed in heart and skeletal muscles, with higher levels in heart (at protein level). Not expressed in other tissues.

The protein localises to the cytoplasm. It localises to the myofibril. Its subcellular location is the sarcomere. The protein resides in the m line. It is found in the cytoskeleton. Functionally, mediates nucleation of actin filaments and thereby promotes actin polymerization. Plays a role in the regulation of actin filament length. Required for normal sarcomere organization in the heart, and for normal heart function. This Homo sapiens (Human) protein is Leiomodin-2 (LMOD2).